Reading from the N-terminus, the 125-residue chain is UPF0538 protein C2C4.04c (125 aa).

It belongs to the UPF0538 family.

The sequence is that of UPF0538 protein C2C4.04c from Schizosaccharomyces pombe (strain 972 / ATCC 24843) (Fission yeast).